The sequence spans 284 residues: Tropomyosin alpha-3 chain (284 aa).

Residue M1 is modified to N-acetylmethionine. A disordered region spans residues M1 to L43. Positions M1 to I284 form a coiled coil. An N-acetylalanine modification is found at E2. Over residues K12–E40 the composition is skewed to basic and acidic residues. T53 carries the phosphothreonine modification. A phosphoserine mark is found at S61 and S87. The residue at position 108 (T108) is a Phosphothreonine. Residues S206 and S215 each carry the phosphoserine modification. An N6-acetyllysine modification is found at L228. Phosphothreonine is present on T252. Y261 bears the Phosphotyrosine mark. S271 is modified (phosphoserine). At T282 the chain carries Phosphothreonine. S283 is modified (phosphoserine).

It belongs to the tropomyosin family. As to quaternary structure, homodimer. Heterodimer of an alpha (TPM1, TPM3 or TPM4) and a beta (TPM2) chain. Interacts with TMOD1. Interacts with TNNT1.

The protein localises to the cytoplasm. Its subcellular location is the cytoskeleton. Functionally, binds to actin filaments in muscle and non-muscle cells. Plays a central role, in association with the troponin complex, in the calcium dependent regulation of vertebrate striated muscle contraction. Smooth muscle contraction is regulated by interaction with caldesmon. In non-muscle cells is implicated in stabilizing cytoskeleton actin filaments. The sequence is that of Tropomyosin alpha-3 chain (TPM3) from Bos taurus (Bovine).